Reading from the N-terminus, the 253-residue chain is Phycoerythrobilin:ferredoxin oxidoreductase (253 aa).

Belongs to the HY2 family.

The catalysed reaction is (3Z)-phycoerythrobilin + oxidized 2[4Fe-4S]-[ferredoxin] = 15,16-dihydrobiliverdin + reduced 2[4Fe-4S]-[ferredoxin] + 2 H(+). In terms of biological role, catalyzes the two-electron reduction of the C2 and C3(1) diene system of 15,16-dihydrobiliverdin. This is Phycoerythrobilin:ferredoxin oxidoreductase (pebB) from Prochlorococcus marinus (strain MIT 9215).